Here is a 348-residue protein sequence, read N- to C-terminus: MAPQPRRLIAPDAREDDAELSLRPLALADFTGQASARANLKVFIEAAKARREALDHVLFWGPPGLGKTTLAQIVARELGVNFRSTSGPVIAKAGDLAAQLTGLEDRDVLFIDEIHRLNPAVEEILYPAMEDFQLDLIIGEGPGARSVKIDLAKFTLIGATTRAGLLTTPLRDRFGIPIRLEYYTVEELECIVRRGARVLSIPIADEGANEIARRARGTPRIAGRLLRRVRDFAAVDGDPEITRAVADRALRLLDVDHIGLDQMDRRFLQTIALSFGGGPVGVETIAAALSEPRDAIEDIIEPYLIQQGFLQRTPRGRMLTSHAFRHLGLAEPPREKTQFQLFSEGGEE.

The tract at residues 1-183 (MAPQPRRLIA…FGIPIRLEYY (183 aa)) is large ATPase domain (RuvB-L). ATP-binding positions include leucine 22, arginine 23, glycine 64, lysine 67, threonine 68, threonine 69, 130–132 (EDF), arginine 173, tyrosine 183, and arginine 220. Threonine 68 lines the Mg(2+) pocket. The small ATPAse domain (RuvB-S) stretch occupies residues 184 to 254 (TVEELECIVR…VADRALRLLD (71 aa)). Positions 257 to 348 (HIGLDQMDRR…FQLFSEGGEE (92 aa)) are head domain (RuvB-H). DNA contacts are provided by arginine 293, arginine 312, and arginine 317.

Belongs to the RuvB family. As to quaternary structure, homohexamer. Forms an RuvA(8)-RuvB(12)-Holliday junction (HJ) complex. HJ DNA is sandwiched between 2 RuvA tetramers; dsDNA enters through RuvA and exits via RuvB. An RuvB hexamer assembles on each DNA strand where it exits the tetramer. Each RuvB hexamer is contacted by two RuvA subunits (via domain III) on 2 adjacent RuvB subunits; this complex drives branch migration. In the full resolvosome a probable DNA-RuvA(4)-RuvB(12)-RuvC(2) complex forms which resolves the HJ.

The protein localises to the cytoplasm. It carries out the reaction ATP + H2O = ADP + phosphate + H(+). The RuvA-RuvB-RuvC complex processes Holliday junction (HJ) DNA during genetic recombination and DNA repair, while the RuvA-RuvB complex plays an important role in the rescue of blocked DNA replication forks via replication fork reversal (RFR). RuvA specifically binds to HJ cruciform DNA, conferring on it an open structure. The RuvB hexamer acts as an ATP-dependent pump, pulling dsDNA into and through the RuvAB complex. RuvB forms 2 homohexamers on either side of HJ DNA bound by 1 or 2 RuvA tetramers; 4 subunits per hexamer contact DNA at a time. Coordinated motions by a converter formed by DNA-disengaged RuvB subunits stimulates ATP hydrolysis and nucleotide exchange. Immobilization of the converter enables RuvB to convert the ATP-contained energy into a lever motion, pulling 2 nucleotides of DNA out of the RuvA tetramer per ATP hydrolyzed, thus driving DNA branch migration. The RuvB motors rotate together with the DNA substrate, which together with the progressing nucleotide cycle form the mechanistic basis for DNA recombination by continuous HJ branch migration. Branch migration allows RuvC to scan DNA until it finds its consensus sequence, where it cleaves and resolves cruciform DNA. The protein is Holliday junction branch migration complex subunit RuvB of Methylocella silvestris (strain DSM 15510 / CIP 108128 / LMG 27833 / NCIMB 13906 / BL2).